A 209-amino-acid chain; its full sequence is Redox-sensing transcriptional repressor Rex (209 aa).

The H-T-H motif DNA-binding region spans 16 to 55 (LYYRFIQNLSLSGKQRVSSAELSEAVKVDSATIRRDFSYF). 90–95 (GVGNLG) is a binding site for NAD(+).

The protein belongs to the transcriptional regulatory Rex family. In terms of assembly, homodimer.

Its subcellular location is the cytoplasm. Functionally, modulates transcription in response to changes in cellular NADH/NAD(+) redox state. The polypeptide is Redox-sensing transcriptional repressor Rex (Bacillus cereus (strain Q1)).